The chain runs to 412 residues: Probable tRNA pseudouridine synthase D (412 aa).

Residue aspartate 97 is the Nucleophile of the active site. In terms of domain architecture, TRUD spans alanine 167–glutamine 370.

This sequence belongs to the pseudouridine synthase TruD family.

It catalyses the reaction uridine(13) in tRNA = pseudouridine(13) in tRNA. Its function is as follows. Could be responsible for synthesis of pseudouridine from uracil-13 in transfer RNAs. In Pyrobaculum neutrophilum (strain DSM 2338 / JCM 9278 / NBRC 100436 / V24Sta) (Thermoproteus neutrophilus), this protein is Probable tRNA pseudouridine synthase D.